The primary structure comprises 169 residues: Large ribosomal subunit protein uL10 (169 aa).

Belongs to the universal ribosomal protein uL10 family. Part of the ribosomal stalk of the 50S ribosomal subunit. The N-terminus interacts with L11 and the large rRNA to form the base of the stalk. The C-terminus forms an elongated spine to which L12 dimers bind in a sequential fashion forming a multimeric L10(L12)X complex.

In terms of biological role, forms part of the ribosomal stalk, playing a central role in the interaction of the ribosome with GTP-bound translation factors. The chain is Large ribosomal subunit protein uL10 from Rickettsia typhi (strain ATCC VR-144 / Wilmington).